Consider the following 536-residue polypeptide: Chaperonin GroEL (536 aa).

ATP-binding positions include 30-33 (TLGP), 86-90 (DGTTT), G414, and D494.

This sequence belongs to the chaperonin (HSP60) family. In terms of assembly, forms a cylinder of 14 subunits composed of two heptameric rings stacked back-to-back. Interacts with the co-chaperonin GroES.

It localises to the cytoplasm. The enzyme catalyses ATP + H2O + a folded polypeptide = ADP + phosphate + an unfolded polypeptide.. Functionally, together with its co-chaperonin GroES, plays an essential role in assisting protein folding. The GroEL-GroES system forms a nano-cage that allows encapsulation of the non-native substrate proteins and provides a physical environment optimized to promote and accelerate protein folding. In Methanosarcina barkeri (strain Fusaro / DSM 804), this protein is Chaperonin GroEL.